The chain runs to 532 residues: Mitogen-activated protein kinase kinase mkk1 (532 aa).

The Protein kinase domain maps to 235-505 (IVELGGLGEG…PWKMLEHPWM (271 aa)). Residues 241–249 (LGEGAGGAV) and K264 each bind ATP. The active-site Proton acceptor is the D362.

Belongs to the protein kinase superfamily. STE Ser/Thr protein kinase family. MAP kinase kinase subfamily.

The catalysed reaction is L-seryl-[protein] + ATP = O-phospho-L-seryl-[protein] + ADP + H(+). It carries out the reaction L-threonyl-[protein] + ATP = O-phospho-L-threonyl-[protein] + ADP + H(+). Functionally, mitogen-activated protein kinase kinase, part of the mkh1-mkk1-spm1 MAPK cascade that regulates regulates vegetative growth, conidial formation, colony surface hydrophobicity, osmotic stress, cell wall integrity maintenance, carbon and nitrogen source utilization, chitin distribution, septa formation, and pathogenicity. This is Mitogen-activated protein kinase kinase mkk1 from Cytospora mali (Apple Valsa canker fungus).